A 215-amino-acid polypeptide reads, in one-letter code: Cytochrome b6 (215 aa).

A helical membrane pass occupies residues 32 to 52 (IFYCLGGITLTCFLVQVATGF). Cysteine 35 contributes to the heme c binding site. 2 residues coordinate heme b: histidine 86 and histidine 100. The next 3 helical transmembrane spans lie at 90-110 (ASMM…TGGF), 116-136 (LTWV…VTGY), and 186-206 (LHTF…FPMI). Heme b is bound by residues histidine 187 and histidine 202.

This sequence belongs to the cytochrome b family. PetB subfamily. As to quaternary structure, the 4 large subunits of the cytochrome b6-f complex are cytochrome b6, subunit IV (17 kDa polypeptide, PetD), cytochrome f and the Rieske protein, while the 4 small subunits are PetG, PetL, PetM and PetN. The complex functions as a dimer. Heme b is required as a cofactor. The cofactor is heme c.

It localises to the plastid. The protein resides in the chloroplast thylakoid membrane. Component of the cytochrome b6-f complex, which mediates electron transfer between photosystem II (PSII) and photosystem I (PSI), cyclic electron flow around PSI, and state transitions. This Populus alba (White poplar) protein is Cytochrome b6.